The sequence spans 190 residues: Peptidyl-tRNA hydrolase (190 aa).

Tyr-14 serves as a coordination point for tRNA. His-19 (proton acceptor) is an active-site residue. Positions 64, 66, and 112 each coordinate tRNA.

The protein belongs to the PTH family. As to quaternary structure, monomer.

Its subcellular location is the cytoplasm. The enzyme catalyses an N-acyl-L-alpha-aminoacyl-tRNA + H2O = an N-acyl-L-amino acid + a tRNA + H(+). Its function is as follows. Hydrolyzes ribosome-free peptidyl-tRNAs (with 1 or more amino acids incorporated), which drop off the ribosome during protein synthesis, or as a result of ribosome stalling. In terms of biological role, catalyzes the release of premature peptidyl moieties from peptidyl-tRNA molecules trapped in stalled 50S ribosomal subunits, and thus maintains levels of free tRNAs and 50S ribosomes. In Chlorobaculum parvum (strain DSM 263 / NCIMB 8327) (Chlorobium vibrioforme subsp. thiosulfatophilum), this protein is Peptidyl-tRNA hydrolase.